We begin with the raw amino-acid sequence, 342 residues long: S-adenosylmethionine:tRNA ribosyltransferase-isomerase (342 aa).

The protein belongs to the QueA family. In terms of assembly, monomer.

It localises to the cytoplasm. The catalysed reaction is 7-aminomethyl-7-carbaguanosine(34) in tRNA + S-adenosyl-L-methionine = epoxyqueuosine(34) in tRNA + adenine + L-methionine + 2 H(+). It participates in tRNA modification; tRNA-queuosine biosynthesis. Transfers and isomerizes the ribose moiety from AdoMet to the 7-aminomethyl group of 7-deazaguanine (preQ1-tRNA) to give epoxyqueuosine (oQ-tRNA). The chain is S-adenosylmethionine:tRNA ribosyltransferase-isomerase from Listeria monocytogenes serotype 4a (strain HCC23).